The sequence spans 209 residues: Uracil phosphoribosyltransferase (209 aa).

5-phospho-alpha-D-ribose 1-diphosphate-binding positions include Arg-79, Arg-104, and 131 to 139; that span reads DPMLATGNS. Uracil is bound by residues Ile-194 and 199 to 201; that span reads GDA. Residue Asp-200 coordinates 5-phospho-alpha-D-ribose 1-diphosphate.

This sequence belongs to the UPRTase family. Mg(2+) is required as a cofactor.

The enzyme catalyses UMP + diphosphate = 5-phospho-alpha-D-ribose 1-diphosphate + uracil. It participates in pyrimidine metabolism; UMP biosynthesis via salvage pathway; UMP from uracil: step 1/1. Its activity is regulated as follows. Allosterically activated by GTP. In terms of biological role, catalyzes the conversion of uracil and 5-phospho-alpha-D-ribose 1-diphosphate (PRPP) to UMP and diphosphate. This chain is Uracil phosphoribosyltransferase, found in Rhizobium leguminosarum bv. trifolii (strain WSM2304).